Here is a 724-residue protein sequence, read N- to C-terminus: ATPase family protein 2 homolog (724 aa).

ATP contacts are provided by residues 281 to 287 and 503 to 508; these read PGSGKTL and GCSKTL.

This sequence belongs to the AAA ATPase family. AFG2 subfamily. Homohexamer; ATP binding induces oligomerization. Forms a ring-shaped particle of about 12 nm diameter, that displays 6-fold radial symmetry. Interacts (via N-terminus) with kinase air-2; the interaction is direct and inhibits air-2 kinase activity in an ATPase-dependent manner.

The protein localises to the cytoplasm. The catalysed reaction is ATP + H2O = ADP + phosphate + H(+). Its function is as follows. ATP-dependent chaperone which uses the energy provided by ATP hydrolysis to generate mechanical force to disassemble protein complexes. Required for various steps of embryonic mitosis including centrosome duplication, spindle assembly, ER dynamics and cell cycle progression. Regulates the stability and activity of kinase air-2, a component of the chromosomal passenger complex (CPC). Inhibits air-2 kinase activity from metaphase to late telophase and negatively regulates air-2 stability during mitotic exit. Controls ER transition into sheet-like structures at the onset of mitosis, possibly by regulating homotypic membrane fusion. The polypeptide is ATPase family protein 2 homolog (Caenorhabditis elegans).